A 184-amino-acid chain; its full sequence is CKLF-like MARVEL transmembrane domain-containing protein 3 (184 aa).

Positions 1–12 are enriched in acidic residues; sequence MWPPDAEPEPDP. The disordered stretch occupies residues 1–22; it reads MWPPDAEPEPDPESAHGPRSGR. The MARVEL domain occupies 36–155; sequence FLCSLKGRLL…DFYLIFNEVA (120 aa). 3 helical membrane passes run 64 to 84, 96 to 116, and 131 to 151; these read ASAFLTVPLLEFLLAVYFLFA, LCWPMMDFLRCVTAALIYFVI, and AAGVFGFFATIVFAIDFYLIF. Residues 163-184 form a disordered region; sequence SGNETTAHRTEEENSNSDSDSD. A compositionally biased stretch (acidic residues) spans 175–184; that stretch reads ENSNSDSDSD.

Belongs to the chemokine-like factor family.

The protein localises to the membrane. This is CKLF-like MARVEL transmembrane domain-containing protein 3 (Cmtm3) from Mus musculus (Mouse).